Reading from the N-terminus, the 402-residue chain is Envelope glycoprotein D (402 aa).

A signal peptide spans 1–30 (MSTFKLMMDGRLVFAMAIAILSVVLSCGTC). At 31-355 (EKAKRAVRGR…NSTFVGISVG (325 aa)) the chain is on the virion surface side. 2 N-linked (GlcNAc...) asparagine; by host glycosylation sites follow: N53 and N61. 3 disulfides stabilise this stretch: C88–C209, C126–C223, and C138–C147. Positions 281–315 (PDNHPGFDSVESEITQNKTDPKPGQADPKPNQPFK) are disordered. N-linked (GlcNAc...) asparagine; by host glycans are attached at residues N297 and N346. Residues 356–372 (LGIAGLVLVGVILYVCL) traverse the membrane as a helical segment. The Intravirion portion of the chain corresponds to 373–402 (RRKKELKKSAQNGLTRLRSTFKDVKYTQLP).

This sequence belongs to the herpesviridae glycoprotein D family.

It localises to the virion membrane. Envelope glycoprotein that binds to host cell entry receptors, promoting the virus entry into host cells. May trigger fusion with host membrane, by recruiting the fusion machinery composed of gB and gH/gL. In Equus caballus (Horse), this protein is Envelope glycoprotein D (gD).